Consider the following 251-residue polypeptide: MKVLGIFHKPSLKSVAEKFSEILFDENFHVEYVGSEIPSIEVDLTLVLGGDGTFLKAAHKVRNPLVGFKGGRLGFLSSYTLGDFDKFLEDLKNENFERDIRYFLKAGDFYTLNEVLLIRDPVQKMVDIQIFFQDGDFYFHADGLIISTPTGSTGYSLSLGGPIMLPNVNSFVITPVAPQFLASRSIIVPDDEEIIVRIDQEINLILDGMDFGKVREVNLKKSRRRIVILRPKDYNFSKSIKEKLGYGKRFL.

Asp-51 acts as the Proton acceptor in catalysis. Residues 51-52 (DG), Lys-56, 113-114 (NE), Lys-124, His-140, Asp-142, 153-158 (TGYSLS), and Ala-177 contribute to the NAD(+) site.

Belongs to the NAD kinase family. Requires a divalent metal cation as cofactor.

The protein resides in the cytoplasm. The catalysed reaction is NAD(+) + ATP = ADP + NADP(+) + H(+). Functionally, involved in the regulation of the intracellular balance of NAD and NADP, and is a key enzyme in the biosynthesis of NADP. Catalyzes specifically the phosphorylation on 2'-hydroxyl of the adenosine moiety of NAD to yield NADP. The protein is NAD kinase of Thermosipho melanesiensis (strain DSM 12029 / CIP 104789 / BI429).